We begin with the raw amino-acid sequence, 327 residues long: Phenylalanine--tRNA ligase alpha subunit (327 aa).

E252 is a binding site for Mg(2+).

It belongs to the class-II aminoacyl-tRNA synthetase family. Phe-tRNA synthetase alpha subunit type 1 subfamily. Tetramer of two alpha and two beta subunits. The cofactor is Mg(2+).

Its subcellular location is the cytoplasm. The enzyme catalyses tRNA(Phe) + L-phenylalanine + ATP = L-phenylalanyl-tRNA(Phe) + AMP + diphosphate + H(+). This chain is Phenylalanine--tRNA ligase alpha subunit, found in Shewanella woodyi (strain ATCC 51908 / MS32).